Here is a 441-residue protein sequence, read N- to C-terminus: Gamma-glutamyl phosphate reductase (441 aa).

Belongs to the gamma-glutamyl phosphate reductase family.

It localises to the cytoplasm. The enzyme catalyses L-glutamate 5-semialdehyde + phosphate + NADP(+) = L-glutamyl 5-phosphate + NADPH + H(+). Its pathway is amino-acid biosynthesis; L-proline biosynthesis; L-glutamate 5-semialdehyde from L-glutamate: step 2/2. Functionally, catalyzes the NADPH-dependent reduction of L-glutamate 5-phosphate into L-glutamate 5-semialdehyde and phosphate. The product spontaneously undergoes cyclization to form 1-pyrroline-5-carboxylate. The protein is Gamma-glutamyl phosphate reductase of Hydrogenobaculum sp. (strain Y04AAS1).